We begin with the raw amino-acid sequence, 469 residues long: UDP-N-acetylmuramate--L-alanine ligase (469 aa).

114 to 120 (GTHGKTT) is an ATP binding site.

This sequence belongs to the MurCDEF family.

Its subcellular location is the cytoplasm. The catalysed reaction is UDP-N-acetyl-alpha-D-muramate + L-alanine + ATP = UDP-N-acetyl-alpha-D-muramoyl-L-alanine + ADP + phosphate + H(+). The protein operates within cell wall biogenesis; peptidoglycan biosynthesis. In terms of biological role, cell wall formation. In Chlorobium phaeovibrioides (strain DSM 265 / 1930) (Prosthecochloris vibrioformis (strain DSM 265)), this protein is UDP-N-acetylmuramate--L-alanine ligase.